The following is a 66-amino-acid chain: U10-theraphotoxin-Cg1a 3 (66 aa).

A signal peptide spans 1 to 21 (MKTSVLFVIFGLALLFCLSFA). A propeptide spanning residues 22-29 (DELEDTGR) is cleaved from the precursor. Cystine bridges form between Cys31-Cys46, Cys38-Cys51, and Cys45-Cys58.

Belongs to the neurotoxin 10 (Hwtx-1) family. 29 (Jztx-13) subfamily. As to expression, expressed by the venom gland.

It is found in the secreted. In terms of biological role, probable ion channel inhibitor. The protein is U10-theraphotoxin-Cg1a 3 of Chilobrachys guangxiensis (Chinese earth tiger tarantula).